Consider the following 165-residue polypeptide: Cytochrome c-type biogenesis protein CcmE (165 aa).

Residues 1 to 7 (MTRKQKR) are Cytoplasmic-facing. Residues 8–28 (LAIIGGGMSFIVAAVLLVMFA) traverse the membrane as a helical; Signal-anchor for type II membrane protein segment. At 29 to 165 (FGQSIAYFYM…ASGDKTGATK (137 aa)) the chain is on the periplasmic side. Heme-binding residues include H123 and Y127. A disordered region spans residues 138 to 165 (DKGLWQQGAEGAAPAASAASGDKTGATK). A compositionally biased stretch (low complexity) spans 145–158 (GAEGAAPAASAASG).

This sequence belongs to the CcmE/CycJ family.

It is found in the cell inner membrane. Its function is as follows. Heme chaperone required for the biogenesis of c-type cytochromes. Transiently binds heme delivered by CcmC and transfers the heme to apo-cytochromes in a process facilitated by CcmF and CcmH. The chain is Cytochrome c-type biogenesis protein CcmE from Agrobacterium fabrum (strain C58 / ATCC 33970) (Agrobacterium tumefaciens (strain C58)).